The chain runs to 200 residues: Large ribosomal subunit protein uL4 (200 aa).

Positions 43 to 67 (RAQKTRAEVSGSGKKPWRQKGTGRA) are disordered.

The protein belongs to the universal ribosomal protein uL4 family. As to quaternary structure, part of the 50S ribosomal subunit.

One of the primary rRNA binding proteins, this protein initially binds near the 5'-end of the 23S rRNA. It is important during the early stages of 50S assembly. It makes multiple contacts with different domains of the 23S rRNA in the assembled 50S subunit and ribosome. Its function is as follows. Forms part of the polypeptide exit tunnel. This chain is Large ribosomal subunit protein uL4, found in Haemophilus influenzae (strain PittEE).